The sequence spans 70 residues: Dermaseptin-PH (70 aa).

Positions 1–22 (MDILKKSLFLILFLGVVSLSIC) are cleaved as a signal peptide. The propeptide occupies 23–44 (EEEKRENEEEMEQDDEQSEMKR). Glutamine amide is present on glutamine 67. Residues 68-70 (GGQ) constitute a propeptide that is removed on maturation.

Belongs to the frog skin active peptide (FSAP) family. As to expression, expressed by the skin glands.

The protein localises to the secreted. The protein resides in the target cell membrane. Its function is as follows. Antimicrobial peptide which inhibits the growth of Gram-negative (MIC=16-64 uM) and Gram-positive bacteria (MIC=32 uM), and pathogenic yeast Candida albicans (MIC=16 uM). Shows a broad-spectrum of anticancer activities against several cancer cell lines. Also shows slight cytotoxicity on human dermal microvascular endothelium cells (IC(50)=4.85 uM). Induces low hemolysis against horse erythrocytes. This Pithecopus hypochondrialis (Orange-legged leaf frog) protein is Dermaseptin-PH.